Reading from the N-terminus, the 164-residue chain is Ribosome-binding factor A (164 aa).

The protein belongs to the RbfA family. As to quaternary structure, monomer. Binds 30S ribosomal subunits, but not 50S ribosomal subunits or 70S ribosomes.

The protein resides in the cytoplasm. One of several proteins that assist in the late maturation steps of the functional core of the 30S ribosomal subunit. Associates with free 30S ribosomal subunits (but not with 30S subunits that are part of 70S ribosomes or polysomes). Required for efficient processing of 16S rRNA. May interact with the 5'-terminal helix region of 16S rRNA. This Caulobacter sp. (strain K31) protein is Ribosome-binding factor A.